We begin with the raw amino-acid sequence, 381 residues long: Protein COS8 (381 aa).

Topologically, residues 1-42 are extracellular; that stretch reads MKENEVKDEKSVDVLSFKQLEFQKTVLPQDVFRNELTWFCYE. A helical membrane pass occupies residues 43-63; the sequence is IYKSLAFRIWMLLWLPLSVWW. Residues 64-72 are Cytoplasmic-facing; sequence KLSSNWIHP. A helical membrane pass occupies residues 73–93; sequence LIVSLLVLFLGPFFVLVICGL. At 94–237 the chain is on the extracellular side; sequence SRKRSLSKQL…WILKRIFNLR (144 aa). A helical membrane pass occupies residues 238–258; that stretch reads CLPLFLYYFLIVYTSGNADLI. Residues 259–381 lie on the Cytoplasmic side of the membrane; sequence SRFLFPVVMF…QSARNEKPLK (123 aa).

It belongs to the DUP/COS family.

It is found in the membrane. The chain is Protein COS8 (COS8) from Saccharomyces cerevisiae (strain ATCC 204508 / S288c) (Baker's yeast).